The sequence spans 1373 residues: TAL effector protein PthXo1 (1373 aa).

2 disordered regions span residues 1–68 and 127–152; these read MDPI…SAGS and AARPPRAKPAPRRRAAQPSDASPAAQ. Residues 131-141 are compositionally biased toward basic residues; it reads PRAKPAPRRRA. Low complexity predominate over residues 142–152; sequence AQPSDASPAAQ. The Cryptic repeat -1 repeat unit spans residues 221–239; sequence THEDIVGVGKQWSGARALE. A Cryptic repeat 0 repeat occupies 256-273; sequence DTGQLVKIAKRGGVTAVE. 23 Core repeat repeats span residues 289–322, 323–356, 357–390, 391–424, 425–458, 459–492, 493–525, 526–559, 560–593, 594–627, 628–661, 662–695, 696–729, 730–763, 764–797, 798–831, 832–865, 866–899, 900–933, 934–967, 968–1001, 1002–1034, and 1035–1068; these read LTPAQVVAIASNNGGKQALETVQRLLPVLCQAHG, LTPAQVVAIASHDGGKQALETMQRLLPVLCQAHG, LPPDQVVAIASNIGGKQALETVQRLLPVLCQAHG, LTPDQVVAIASHGGGKQALETVQRLLPVLCQAHG, LTPDQVVAIASHDGGKQALETVQRLLPVLCQAHG, LTPDQVVAIASNGGGKQALETVQRLLPVLCQAHG, LTPDQVVAIASNGGKQALETVQRLLPVLCQAHG, LTPDQVVAIASHDGGKQALETVQRLLPVLCQTHG, LTPAQVVAIASHDGGKQALETVQQLLPVLCQAHG, LTPDQVVAIASNIGGKQALATVQRLLPVLCQAHG, LTQVQVVAIASNIGGKQALETVQRLLPVLCQAHG, LTPAQVVAIASHDGGKQALETVQRLLPVLCQAHG, LTQEQVVAIASNNGGKQALETVQRLLPVLCQAHG, LTPAQVVAIASNIGGKQALETVQRLLPVLCQDHG, LTLAQVVAIASNIGGKQALETVQRLLPVLCQAHG, LTQDQVVAIASNIGGKQALETVQRLLPVLCQDHG, LTPDQVVAIASNIGGKQALETVQRLLPVLCQDHG, LTLDQVVAIASNGGKQALETVQRLLPVLCQDHG, and LTPDQVVAIASNSGGKQALETVQRLLPVLCQDHG. 4 HEAT repeats span residues 714–760, 782–828, 850–893, and 918–961; these read LETV…VLCQ and LETV…LLPV. One copy of the HEAT 5 repeat lies at 1053-1091; that stretch reads LETVQRLLPVLCQDHGLTPNQVVAIASNGGKQALESIVA. Residues 1069 to 1087 form a Core repeat 23.5 repeat; the sequence is LTPNQVVAIASNGGKQALE. Residues 1136–1364 are acidic activation domain; it reads RVNRRIGERT…ELAWLMELLP (229 aa). A Nuclear localization signal NLS1 motif is present at residues 1222–1225; the sequence is KRAK. Residues 1250–1286 form a disordered region; it reads LDAPSPMHEGDQTGASSRKRSRSDRAVTGPSAQHSFE. Residues 1268–1271 carry the Nuclear localization signal NLS2 motif; it reads KRSR. A Nuclear localization signal NLS3 motif is present at residues 1305–1308; it reads KRPR.

The protein belongs to the transcription activator-like effector (TALE) family.

Its subcellular location is the secreted. The protein resides in the host nucleus. In terms of biological role, avirulence protein. Acts as a transcription factor in rice, inducing expression of a number of host genes including SWEET11 (Os8N3, XA13, AC Q6YZF3) in susceptible plants with the Xa13 allele. Plants with the xa13 allele, which has an altered promoter, are resistant to bacterial blight caused by this bacterial strain and do not induce SWEET11. The xa13 allele elicits an atypical hypersensitive response (HR). PthXo1 binds SWEET11 promoter DNA in a sequence-specific manner. In Xanthomonas oryzae pv. oryzae (strain PXO99A), this protein is TAL effector protein PthXo1 (pthXo1).